The primary structure comprises 362 residues: tRNA-specific 2-thiouridylase MnmA 3 (362 aa).

ATP contacts are provided by residues 11-18 and Met-37; that span reads GMSGGIDS. Cys-91 functions as the Nucleophile in the catalytic mechanism. Cys-91 and Cys-188 are oxidised to a cystine. Gly-115 contributes to the ATP binding site. Residues 137 to 139 form an interaction with tRNA region; sequence KDQ. Cys-188 (cysteine persulfide intermediate) is an active-site residue. The tract at residues 296–297 is interaction with tRNA; sequence RY.

This sequence belongs to the MnmA/TRMU family.

The protein resides in the cytoplasm. The enzyme catalyses S-sulfanyl-L-cysteinyl-[protein] + uridine(34) in tRNA + AH2 + ATP = 2-thiouridine(34) in tRNA + L-cysteinyl-[protein] + A + AMP + diphosphate + H(+). Catalyzes the 2-thiolation of uridine at the wobble position (U34) of tRNA, leading to the formation of s(2)U34. The sequence is that of tRNA-specific 2-thiouridylase MnmA 3 from Bacteroides fragilis (strain ATCC 25285 / DSM 2151 / CCUG 4856 / JCM 11019 / LMG 10263 / NCTC 9343 / Onslow / VPI 2553 / EN-2).